The chain runs to 335 residues: Phosphate acyltransferase (335 aa).

The protein belongs to the PlsX family. In terms of assembly, homodimer. Probably interacts with PlsY.

It is found in the cytoplasm. It carries out the reaction a fatty acyl-[ACP] + phosphate = an acyl phosphate + holo-[ACP]. The protein operates within lipid metabolism; phospholipid metabolism. Functionally, catalyzes the reversible formation of acyl-phosphate (acyl-PO(4)) from acyl-[acyl-carrier-protein] (acyl-ACP). This enzyme utilizes acyl-ACP as fatty acyl donor, but not acyl-CoA. In Leptospira interrogans serogroup Icterohaemorrhagiae serovar copenhageni (strain Fiocruz L1-130), this protein is Phosphate acyltransferase.